The sequence spans 295 residues: GTPase Era (295 aa).

Residues 7-176 (KTISVCIIGR…IKSKAKVSPW (170 aa)) enclose the Era-type G domain. A G1 region spans residues 15 to 22 (GRPNSGKS). Position 15–22 (15–22 (GRPNSGKS)) interacts with GTP. The G2 stretch occupies residues 41–45 (QTTRS). A G3 region spans residues 62–65 (DTPG). Residues 62 to 66 (DTPGI) and 124 to 127 (NKID) contribute to the GTP site. Residues 124–127 (NKID) form a G4 region. Positions 152 to 154 (ISA) are G5. Positions 204-281 (LQQELPYKLT…HLFLFVKVHA (78 aa)) constitute a KH type-2 domain.

The protein belongs to the TRAFAC class TrmE-Era-EngA-EngB-Septin-like GTPase superfamily. Era GTPase family. Monomer.

The protein localises to the cytoplasm. It localises to the cell inner membrane. Functionally, an essential GTPase that binds both GDP and GTP, with rapid nucleotide exchange. Plays a role in 16S rRNA processing and 30S ribosomal subunit biogenesis and possibly also in cell cycle regulation and energy metabolism. In Rickettsia prowazekii (strain Madrid E), this protein is GTPase Era.